Consider the following 347-residue polypeptide: Holliday junction branch migration complex subunit RuvB (347 aa).

The interval 1–183 (MSEERFVSGH…FGVVLQLQFY (183 aa)) is large ATPase domain (RuvB-L). Residues L22, R23, G64, K67, T68, T69, 130 to 132 (EDF), R173, Y183, and R220 each bind ATP. T68 serves as a coordination point for Mg(2+). The small ATPAse domain (RuvB-S) stretch occupies residues 184 to 254 (SEEELTRILM…VADAGLRMMG (71 aa)). The head domain (RuvB-H) stretch occupies residues 257 to 347 (AMGLDTVDHK…PEGPVQPRLF (91 aa)). Residues R312 and R317 each coordinate DNA.

It belongs to the RuvB family. Homohexamer. Forms an RuvA(8)-RuvB(12)-Holliday junction (HJ) complex. HJ DNA is sandwiched between 2 RuvA tetramers; dsDNA enters through RuvA and exits via RuvB. An RuvB hexamer assembles on each DNA strand where it exits the tetramer. Each RuvB hexamer is contacted by two RuvA subunits (via domain III) on 2 adjacent RuvB subunits; this complex drives branch migration. In the full resolvosome a probable DNA-RuvA(4)-RuvB(12)-RuvC(2) complex forms which resolves the HJ.

The protein localises to the cytoplasm. The enzyme catalyses ATP + H2O = ADP + phosphate + H(+). The RuvA-RuvB-RuvC complex processes Holliday junction (HJ) DNA during genetic recombination and DNA repair, while the RuvA-RuvB complex plays an important role in the rescue of blocked DNA replication forks via replication fork reversal (RFR). RuvA specifically binds to HJ cruciform DNA, conferring on it an open structure. The RuvB hexamer acts as an ATP-dependent pump, pulling dsDNA into and through the RuvAB complex. RuvB forms 2 homohexamers on either side of HJ DNA bound by 1 or 2 RuvA tetramers; 4 subunits per hexamer contact DNA at a time. Coordinated motions by a converter formed by DNA-disengaged RuvB subunits stimulates ATP hydrolysis and nucleotide exchange. Immobilization of the converter enables RuvB to convert the ATP-contained energy into a lever motion, pulling 2 nucleotides of DNA out of the RuvA tetramer per ATP hydrolyzed, thus driving DNA branch migration. The RuvB motors rotate together with the DNA substrate, which together with the progressing nucleotide cycle form the mechanistic basis for DNA recombination by continuous HJ branch migration. Branch migration allows RuvC to scan DNA until it finds its consensus sequence, where it cleaves and resolves cruciform DNA. In Symbiobacterium thermophilum (strain DSM 24528 / JCM 14929 / IAM 14863 / T), this protein is Holliday junction branch migration complex subunit RuvB.